Reading from the N-terminus, the 267-residue chain is Myb-related protein Hv1 (267 aa).

2 HTH myb-type domains span residues 9 to 61 and 62 to 116; these read KAHT…INYL and RPDL…RRKL. DNA-binding regions (H-T-H motif) lie at residues 37-61 and 89-112; these read WRSLPKAAGLLRCGKSCRLRWINYL and WSLIAGRLPGRTDNEIKNYWNTHI.

As to expression, germinating seed and apical meristem of shoot and root.

It is found in the nucleus. In terms of biological role, possible transcription activator in response to an external signal. May be involved in the regulation of flavonoid biosynthesis. The protein is Myb-related protein Hv1 (MYB1) of Hordeum vulgare (Barley).